The chain runs to 566 residues: FAD-dependent monooxygenase asqG (566 aa).

A signal peptide spans M1 to A19. E33, V47, R113, D313, and A326 together coordinate FAD. A run of 2 helical transmembrane segments spans residues A448–W468 and G482–V502.

The protein belongs to the paxM FAD-dependent monooxygenase family. FAD serves as cofactor.

The protein localises to the membrane. It catalyses the reaction [(1'E)-3'-hydroxy-3',7'-dimethylocta-1',6'-dien-1'-yl]-quinolinone B + NADPH + O2 + H(+) = [(1'E)-5'-(3',3'-dimethyloxiran-2'-yl)-3'-hydroxy-3'-methylpent-1'-en-1'-yl]-quinolinone B + NADP(+) + H2O. Its pathway is secondary metabolite biosynthesis. It participates in alkaloid biosynthesis. It functions in the pathway mycotoxin biosynthesis. In terms of biological role, FAD-dependent monooxygenase; part of the gene cluster that mediates the biosynthesis of the aspoquinolone mycotoxins. Within the pathway, the FAD-dependent monooxygenase asqG catalyzes the epoxidation of the terminal C7'-C8' olefin to produce the intermediate [(1'E)-5'-(3',3'-dimethyloxiran-2'-yl)-3'-hydroxy-3'-methylpent-1'-en-1'-yl]-quinolinone B. The first step of the pathway is catalyzed by the nonribosomal peptide synthetase asqK that condenses anthranilic acid and O-methyl-L-tyrosine to produce 4'-methoxycyclopeptin. 4'-methoxycyclopeptin is then converted to 4'-methoxydehydrocyclopeptin by the ketoglutarate-dependent dioxygenase asqJ. AsqJ also converts its first product 4'-methoxydehydrocyclopeptin to 4'-methoxycyclopenin. The following conversion of 4'-methoxycyclopenin into 4'-methoxyviridicatin is catalyzed by the cyclopenase asqI. 4'-methoxyviridicatin is the precursor of quinolone natural products, and is further converted to quinolinone B. The prenyltransferase asqH1 then catalyzes the canonical Friedel-Crafts alkylation of quinolinone B with dimethylallyl cation to yield dimethylallyl quinolone, which is subjected to FAD-dependent dehydrogenation by the FAD-linked oxidoreductase asqF to yield conjugated aryl diene. The delta(3') double bond then serves as the site of the second alkylation with DMAPP catalyzed by the prenyltransferase asqH2 to yield a carbenium ion intermediate, which can be attacked by H(2)O to yield a styrenyl quinolone containing a C3'-hydroxyprenyl chain. The FAD-dependent monooxygenase asqG performs epoxidation of the terminal C7'-C8' olefin. Finally, after dehydratation of the epoxide at C3 by asqC, the quinolone epoxide rearrangement protein asqO catalyzes an enzymatic 3-exo-tet cyclization to yield the cyclopropyl-THF ring system in aspoquinolone. The sequence is that of FAD-dependent monooxygenase asqG from Emericella nidulans (strain FGSC A4 / ATCC 38163 / CBS 112.46 / NRRL 194 / M139) (Aspergillus nidulans).